The chain runs to 81 residues: Short neurotoxin 1 (81 aa).

Positions 1–21 (MKTLLLTLVVVTIVFLDLGYT) are cleaved as a signal peptide. 4 disulfide bridges follow: cysteine 24–cysteine 43, cysteine 38–cysteine 60, cysteine 62–cysteine 73, and cysteine 74–cysteine 79.

It belongs to the three-finger toxin family. Short-chain subfamily. Type I alpha-neurotoxin sub-subfamily. In terms of tissue distribution, expressed by the venom gland.

Its subcellular location is the secreted. In terms of biological role, binds to muscle nicotinic acetylcholine receptor (nAChR) and inhibit acetylcholine from binding to the receptor, thereby impairing neuromuscular transmission. This Notechis scutatus scutatus (Mainland tiger snake) protein is Short neurotoxin 1.